The primary structure comprises 532 residues: MQKAQRIIKTYRRNRMIVCTICALVTLASTLSVRFISQRNLNQQRVVQFANHAVEELDKVLLPLQAGSEVLLPLIGLPCSVAHLPLRKQAAKLQTVRSIGLVQDGTLYCSSIFGYRNVPVVDILAELPAPQPLLRLTIDRALIKGSPVLIQWTPAAGSSNAGVMEMINIDLLTAMLLEPQLPQISSASLTVDKRHLLYGNGLVDSLPQPEDNENYQVSSQRFPFTINVNGPGATALAWHYLPTQLPLAVLLSLLVGYIAWLATAYRMSFSREINLGLAQHEFELFCQPLLNARSQQCIGVEILLRWNNPRQGWISPDVFIPIAEEHHLIVPLTRYVMAETIRQRHVFPMSSQFHVGINVAPSHFRRGVLIKDLNQYWFSAHPIQQLILEITERDALLDVDYRIARELHRKNVKLAIDDFGTGNSSFSWLETLRPDVLKIDKSFTAAIGSDAVNSTVTDIIIALGQRLNIELVAEGVETQEQAKYLRRHGVHILQGYLYAQPMPLRDFPKWLAGSQPPPARHNGHITPIMPLR.

Helical transmembrane passes span 16 to 36 (MIVC…VRFI) and 245 to 265 (LPLA…ATAY). Residues 266 to 515 (RMSFSREINL…DFPKWLAGSQ (250 aa)) form the EAL domain.

The protein localises to the cell membrane. It carries out the reaction 3',3'-c-di-GMP + H2O = 5'-phosphoguanylyl(3'-&gt;5')guanosine + H(+). Its function is as follows. Phosphodiesterase (PDE) that catalyzes the hydrolysis of cyclic-di-GMP (c-di-GMP) to 5'-pGpG. May serve as a negative regulator of cellulose synthesis (as has been suggested for S.typhimurium); overexpression inhibits cell aggregation in strains able to produce adhesive curli fimbriae. Cyclic-di-GMP is a second messenger which controls cell surface-associated traits in bacteria. The sequence is that of Probable cyclic di-GMP phosphodiesterase PdeD from Escherichia coli (strain K12).